A 258-amino-acid chain; its full sequence is Alpha-fibrinogenase (258 aa).

The signal sequence occupies residues 1-18; it reads MVLIRVLANLVMLHLSYG. The propeptide occupies 19-24; it reads EKSSEL. Residues 25–249 form the Peptidase S1 domain; the sequence is VIGGRPCNIN…YNDWIQSIIA (225 aa). Intrachain disulfides connect Cys-31–Cys-163, Cys-50–Cys-66, Cys-98–Cys-256, Cys-142–Cys-210, Cys-174–Cys-189, and Cys-200–Cys-225. An N-linked (GlcNAc...) asparagine glycan is attached at Asn-44. The active-site Charge relay system is the His-65. N-linked (GlcNAc...) asparagine glycans are attached at residues Asn-79 and Asn-101. The active-site Charge relay system is Asp-110. Ser-204 serves as the catalytic Charge relay system.

The protein belongs to the peptidase S1 family. Snake venom subfamily. Monomer. In terms of processing, glycosylated. Contains 8.5% of hexoses, 5.8% of hexosamines and 0.8% of sialic acids. As to expression, expressed by the venom gland.

Its subcellular location is the secreted. Its activity is regulated as follows. Inhibited by diisopropylfluorophosphate (DFP) and PMSF, and partially by soybean trypsin inhibitor, but not by EDTA. Degrades alpha chain of fibrinogen (FGA), and has strong caseinolytic activity. Cleaves oxidized insulin B-chain at '40-Tyr-|-Leu-41', '48-Phe-|-Phe-49' and '49-Phe-|-Tyr-50', and glucagon at the bonds '62-Tyr-|-Ser-63', 66-Leu-|-Asp-67' and '78-Leu-|-Met-79' bonds. This chain is Alpha-fibrinogenase, found in Macrovipera lebetinus (Levantine viper).